The primary structure comprises 151 residues: FAD synthase (151 aa).

Residues 21-22 (TF), 26-29 (HPGH), and aspartate 104 each bind ATP.

The protein belongs to the archaeal FAD synthase family. In terms of assembly, homodimer. The cofactor is a divalent metal cation.

The enzyme catalyses FMN + ATP + H(+) = FAD + diphosphate. Its pathway is cofactor biosynthesis; FAD biosynthesis; FAD from FMN: step 1/1. In terms of biological role, catalyzes the transfer of the AMP portion of ATP to flavin mononucleotide (FMN) to produce flavin adenine dinucleotide (FAD) coenzyme. This Methanosarcina mazei (strain ATCC BAA-159 / DSM 3647 / Goe1 / Go1 / JCM 11833 / OCM 88) (Methanosarcina frisia) protein is FAD synthase.